The primary structure comprises 586 residues: Ezrin (586 aa).

The 294-residue stretch at 2 to 295 folds into the FERM domain; the sequence is PKPINVRVTT…GNHELYMRRR (294 aa). The residue at position 60 (K60) is an N6-acetyllysine. The [IL]-x-C-x-x-[DE] motif signature appears at 115–120; it reads IYCPPE. Phosphotyrosine; by PDGFR is present on Y146. Residues 244 to 586 form an interaction with SCYL3 region; the sequence is EIRNISFNDK…KQRIDEFEAM (343 aa). Residues 302 to 462 adopt a coiled-coil conformation; sequence VQQMKAQARE…QDDLVKTKEE (161 aa). The disordered stretch occupies residues 305–340; that stretch reads MKAQAREEKHQKQLERQQLESEKKRREAVEQEKEQM. Over residues 308-340 the composition is skewed to basic and acidic residues; the sequence is QAREEKHQKQLERQQLESEKKRREAVEQEKEQM. Y354 carries the phosphotyrosine; by PDGFR modification. S366 bears the Phosphoserine mark. Y478 is modified (phosphotyrosine). S535 is subject to Phosphoserine. The residue at position 567 (T567) is a Phosphothreonine; by ROCK2 and PKC/PRKCI.

As to quaternary structure, interacts with PALS1. Found in a complex with EZR, PODXL and NHERF2. Interacts with MCC, PLEKHG6, PODXL, SCYL3/PACE1, NHERF1, NHERF2 and TMEM8B. Interacts (when phosphorylated) with FES/FPS. Interacts with dimeric S100P, the interaction may be activating through unmasking of F-actin binding sites. Identified in complexes that contain VIM, EZR, AHNAK, BFSP1, BFSP2, ANK2, PLEC, PRX and spectrin. Detected in a complex composed of at least EZR, AHNAK, PPL and PRX. Interacts with PDPN (via cytoplasmic domain); activates RHOA and promotes epithelial-mesenchymal transition. Interacts with SPN/CD43 cytoplasmic tail, CD44 and ICAM2. Interacts with SLC9A3; interaction targets SLC9A3 to the apical membrane. Interacts with SLC9A1; regulates interactions of SLC9A1 with cytoskeletal and promotes stress fiber formation. Interacts with CLIC5; may work together in a complex which also includes RDX and MYO6 to stabilize linkages between the plasma membrane and subjacent actin cytoskeleton at the base of stereocilia. Phosphorylated by tyrosine-protein kinases. Phosphorylation by ROCK2 suppresses the head-to-tail association of the N-terminal and C-terminal halves resulting in an opened conformation which is capable of actin and membrane-binding. In terms of processing, S-nitrosylation is induced by interferon-gamma and oxidatively-modified low-densitity lipoprotein (LDL(ox)) possibly implicating the iNOS-S100A8/9 transnitrosylase complex.

It localises to the apical cell membrane. It is found in the cell projection. Its subcellular location is the microvillus membrane. The protein localises to the ruffle membrane. The protein resides in the cytoplasm. It localises to the cell cortex. It is found in the cytoskeleton. Its subcellular location is the microvillus. A head-to-tail association, of the N-terminal and C-terminal halves results in a closed conformation (inactive form) which is incapable of actin or membrane-binding. Probably involved in connections of major cytoskeletal structures to the plasma membrane. In epithelial cells, required for the formation of microvilli and membrane ruffles on the apical pole. Along with PLEKHG6, required for normal macropinocytosis. In Oryctolagus cuniculus (Rabbit), this protein is Ezrin (EZR).